A 493-amino-acid chain; its full sequence is Tripartite motif-containing protein 5 (493 aa).

Ala2 carries the post-translational modification N-acetylalanine. An RING-type zinc finger spans residues 15–59 (CPICLELLTQPLSLDCGHSFCQACLTANHKKSMLDKGESSCPVCR). Ser86 bears the Phosphoserine mark. Residues 90-132 (QKVDHCARHGEKLLLFCQEDGKVICWLCERSQEHRGHHTFLTE) form a B box-type zinc finger. Zn(2+)-binding residues include Cys95, His98, Cys117, and His123. Residues 131–240 (TEEVAREYQV…LISDLERRLQ (110 aa)) adopt a coiled-coil conformation. The interval 185 to 198 (FEQLRDILDWEESN) is required for interaction with GABARAP and for autophagy. The region spanning 281–493 (LKGMLEVFRE…VPMTLCSPSS (213 aa)) is the B30.2/SPRY domain.

Belongs to the TRIM/RBCC family. As to quaternary structure, can form homodimers and homotrimers. In addition to lower-order dimerization, also exhibits a higher-order multimerization and both low- and high-order multimerizations are essential for its restriction activity. Interacts with BTBD1 and BTBD2. Interacts with PSMC4, PSMC5, PSMD7 and HSPA8/HSC70. Interacts (via B30.2/SPRY domain) with HSPA1A/B. Interacts with PSMC2, MAP3K7/TAK1, TAB2 and TAB3. Interacts with SQSTM1. Interacts with TRIM6 and TRIM34. Interacts with ULK1 (phosphorylated form), GABARAP, GABARAPL1, GABARAPL2, MAP1LC3A, MAP1LC3C and BECN1. In terms of processing, degraded in a proteasome-independent fashion in the absence of viral infection but in a proteasome-dependent fashion following exposure to restriction sensitive virus. Autoubiquitinated in a RING finger- and UBE2D2-dependent manner. Monoubiquitinated by TRIM21. Deubiquitinated by Yersinia YopJ. Ubiquitination may not lead to proteasomal degradation.

The protein resides in the cytoplasm. Its subcellular location is the nucleus. The catalysed reaction is S-ubiquitinyl-[E2 ubiquitin-conjugating enzyme]-L-cysteine + [acceptor protein]-L-lysine = [E2 ubiquitin-conjugating enzyme]-L-cysteine + N(6)-ubiquitinyl-[acceptor protein]-L-lysine.. It participates in protein modification; protein ubiquitination. Its function is as follows. Capsid-specific restriction factor that prevents infection from non-host-adapted retroviruses. Blocks viral replication early in the life cycle, after viral entry but before reverse transcription. In addition to acting as a capsid-specific restriction factor, also acts as a pattern recognition receptor that activates innate immune signaling in response to the retroviral capsid lattice. Binding to the viral capsid triggers its E3 ubiquitin ligase activity, and in concert with the heterodimeric ubiquitin conjugating enzyme complex UBE2V1-UBE2N (also known as UBC13-UEV1A complex) generates 'Lys-63'-linked polyubiquitin chains, which in turn are catalysts in the autophosphorylation of the MAP3K7/TAK1 complex (includes TAK1, TAB2, and TAB3). Activation of the MAP3K7/TAK1 complex by autophosphorylation results in the induction and expression of NF-kappa-B and MAPK-responsive inflammatory genes, thereby leading to an innate immune response in the infected cell. Plays a role in regulating autophagy through activation of autophagy regulator BECN1 by causing its dissociation from its inhibitors BCL2 and TAB2. This Pan paniscus (Pygmy chimpanzee) protein is Tripartite motif-containing protein 5 (TRIM5).